Reading from the N-terminus, the 805-residue chain is Phenylalanine--tRNA ligase beta subunit (805 aa).

A tRNA-binding domain is found at 39 to 155 (VKVLGAFRIC…EDAPMGMRFI (117 aa)). The B5 domain maps to 408 to 479 (DTSRAYRFDP…RVASLTKLQG (72 aa)). Residues D457, D463, E466, and E467 each contribute to the Mg(2+) site. An FDX-ACB domain is found at 707–804 (SDLQAVERDF…VAKATGATLR (98 aa)).

It belongs to the phenylalanyl-tRNA synthetase beta subunit family. Type 1 subfamily. As to quaternary structure, tetramer of two alpha and two beta subunits. Mg(2+) is required as a cofactor.

It is found in the cytoplasm. The catalysed reaction is tRNA(Phe) + L-phenylalanine + ATP = L-phenylalanyl-tRNA(Phe) + AMP + diphosphate + H(+). This Cereibacter sphaeroides (strain ATCC 17023 / DSM 158 / JCM 6121 / CCUG 31486 / LMG 2827 / NBRC 12203 / NCIMB 8253 / ATH 2.4.1.) (Rhodobacter sphaeroides) protein is Phenylalanine--tRNA ligase beta subunit.